We begin with the raw amino-acid sequence, 667 residues long: Fermitin family homolog 3 (667 aa).

Ser8 bears the Phosphoserine mark. The residue at position 11 (Tyr11) is a Phosphotyrosine. In terms of domain architecture, FERM spans Trp229 to Val558. One can recognise a PH domain in the interval Asp354 to Lys457. A Phosphotyrosine modification is found at Tyr504. Phosphothreonine is present on Thr591.

Belongs to the kindlin family. As to quaternary structure, interacts with ITGB1, ITGB2 and ITGB3 (via cytoplasmic tails). In terms of tissue distribution, highly expressed in lymph node. Expressed in thymus, spleen and leukocytes. Weakly expressed in placenta, small intestine, stomach, testis and lung. Overexpressed in B-cell malignancies.

It is found in the cell projection. The protein resides in the podosome. In terms of biological role, plays a central role in cell adhesion in hematopoietic cells. Acts by activating the integrin beta-1-3 (ITGB1, ITGB2 and ITGB3). Required for integrin-mediated platelet adhesion and leukocyte adhesion to endothelial cells. Required for activation of integrin beta-2 (ITGB2) in polymorphonuclear granulocytes (PMNs). Its function is as follows. Isoform 2 may act as a repressor of NF-kappa-B and apoptosis. The chain is Fermitin family homolog 3 (FERMT3) from Homo sapiens (Human).